The sequence spans 1049 residues: Self-sufficient cytochrome P450 monooxygenase CYP505E4 (1049 aa).

A heme-binding site is contributed by cysteine 405. The interval 462 to 492 is disordered; the sequence is ATALSQHNMSAGATSSPGSSAHPAGNKNAQD. Residues 471-486 are compositionally biased toward low complexity; that stretch reads SAGATSSPGSSAHPAG. Residues 499 to 640 enclose the Flavodoxin-like domain; it reads ISFFYGSNSG…DLEVWEETNL (142 aa). FMN-binding positions include 505-509 and 584-616; these read SNSGT and VFGC…TRLT. The 229-residue stretch at 678–906 folds into the FAD-binding FR-type domain; sequence RDLIEGKVTA…RPAKEAFHLP (229 aa).

It in the N-terminal section; belongs to the cytochrome P450 family. FAD serves as cofactor. The cofactor is FMN. Heme is required as a cofactor.

The enzyme catalyses 2 oxidized [cytochrome P450] + NADPH = 2 reduced [cytochrome P450] + NADP(+) + H(+). It carries out the reaction an organic molecule + reduced [NADPH--hemoprotein reductase] + O2 = an alcohol + oxidized [NADPH--hemoprotein reductase] + H2O + H(+). The catalysed reaction is dodecanoate + reduced [NADPH--hemoprotein reductase] + O2 = 5-hydroxydodecanoate + oxidized [NADPH--hemoprotein reductase] + H2O + H(+). It catalyses the reaction tetradecanoate + reduced [NADPH--hemoprotein reductase] + O2 = 7-hydroxytetradecanoate + oxidized [NADPH--hemoprotein reductase] + H2O + H(+). The enzyme catalyses dodecan-1-ol + reduced [NADPH--hemoprotein reductase] + O2 = 1,5-dodecanediol + oxidized [NADPH--hemoprotein reductase] + H2O + H(+). It carries out the reaction dodecan-1-ol + reduced [NADPH--hemoprotein reductase] + O2 = 1,4-dodecanediol + oxidized [NADPH--hemoprotein reductase] + H2O + H(+). The catalysed reaction is dodecan-1-ol + reduced [NADPH--hemoprotein reductase] + O2 = 1,6-dodecanediol + oxidized [NADPH--hemoprotein reductase] + H2O + H(+). In terms of biological role, self-sufficient cytochrome P450 monooxygenase that catalyzes the regioselective in-chain hydroxylation of alkanes, fatty alcohols, and fatty acids at the omega-7 position. Performs hydroxylation of C10-C16 n-alkanes and C12 and C14 fatty alcohols; and thereby enables the one step biocatalytic synthesis of rare alcohols such as 5-dodecanol and 7-tetradecanol. Converts 1-dodecanol into 1,5-dodecanediol as major product with very little sub-terminally hydroxylated products with the 1,4-dodecanediol and 1,6-dodecanediol more abundant. Converts dodecanoic acid to 5-hydroxydodecanoic acid which can be further converted into delta-dodecalactone by lactonization of the 5-hydroxy acid at low pH. Also gives sub-terminal hydroxylation of dodecanoic acid with 9-hydroxydodecanoic acid being the second most abundant product. This is Self-sufficient cytochrome P450 monooxygenase CYP505E4 from Penicillium freii.